The following is an 89-amino-acid chain: UPF0335 protein RPE_4107 (89 aa).

The protein belongs to the UPF0335 family.

This chain is UPF0335 protein RPE_4107, found in Rhodopseudomonas palustris (strain BisA53).